We begin with the raw amino-acid sequence, 907 residues long: Catenin alpha-1 (907 aa).

A compositionally biased stretch (basic and acidic residues) spans 870–879; that stretch reads VKREKLDDGQ. Residues 870–895 form a disordered region; it reads VKREKLDDGQTNKVKRSSQKKHINPV. Positions 882-892 are enriched in basic residues; the sequence is KVKRSSQKKHI.

This sequence belongs to the vinculin/alpha-catenin family. Interacts with ctnnb1, jupa and cdh2. Interacts with cdh1 during early stages of oogenesis, interaction is no longer present when oocyte develops into the unfertilized egg. Expressed in the skin (at protein level). Expressed in the ovary.

It localises to the cell junction. It is found in the adherens junction. The protein localises to the cytoplasm. The protein resides in the cytoskeleton. Its subcellular location is the cell membrane. It localises to the nucleus. In terms of biological role, associates with the cytoplasmic domain of a variety of cadherins, forming catenin and cadherin complexes which are further linked to the actin filament network and is thereby involved in cell-cell adhesion. Required for embryonic development, via maintenance of adherens junctions that facilitate the maintenance of the epithelial barrier. The sequence is that of Catenin alpha-1 from Danio rerio (Zebrafish).